The chain runs to 629 residues: tRNA uridine 5-carboxymethylaminomethyl modification enzyme MnmG (629 aa).

FAD contacts are provided by residues 13 to 18 (GGGHAG), V125, and S180. 273 to 287 (GPRYCPSIEDKVMRF) contributes to the NAD(+) binding site. Q370 contributes to the FAD binding site.

It belongs to the MnmG family. As to quaternary structure, homodimer. Heterotetramer of two MnmE and two MnmG subunits. FAD is required as a cofactor.

The protein localises to the cytoplasm. Functionally, NAD-binding protein involved in the addition of a carboxymethylaminomethyl (cmnm) group at the wobble position (U34) of certain tRNAs, forming tRNA-cmnm(5)s(2)U34. The sequence is that of tRNA uridine 5-carboxymethylaminomethyl modification enzyme MnmG from Escherichia coli O157:H7.